The following is a 512-amino-acid chain: Aldehyde dehydrogenase B (512 aa).

Catalysis depends on residues E268 and C307.

As to quaternary structure, homotetramer.

It carries out the reaction an aldehyde + NADP(+) + H2O = a carboxylate + NADPH + 2 H(+). It catalyses the reaction acetaldehyde + NADP(+) + H2O = acetate + NADPH + 2 H(+). The catalysed reaction is chloroacetaldehyde + NADP(+) + H2O = chloroacetate + NADPH + 2 H(+). The enzyme catalyses propanal + NADP(+) + H2O = propanoate + NADPH + 2 H(+). Its activity is regulated as follows. Magnesium increases enzyme activity with various substrates. Catalyzes the NADP(+)-dependent oxidation of diverse aldehydes to their corresponding carboxylic acids, with a preference for acetaldehyde and chloroacetaldehyde. May play a role in detoxifying aldehydes present during stationary phase. Cannot use NAD(+) instead of NADP(+) as the electron acceptor. To a lesser extent is also able to oxidize propionaldehyde (propanal), benzaldehyde, mafosfamide, and 4-hydroperoxycyclophosphamide. Does not use either glyceraldehyde or glycolaldehyde as substrates. This Escherichia coli (strain K12) protein is Aldehyde dehydrogenase B.